Reading from the N-terminus, the 101-residue chain is Small ribosomal subunit protein uS14 (101 aa).

Residues 1 to 21 are disordered; the sequence is MAKTSSVEKNNRRRKLADQYG.

Belongs to the universal ribosomal protein uS14 family. In terms of assembly, part of the 30S ribosomal subunit. Contacts proteins S3 and S10.

Functionally, binds 16S rRNA, required for the assembly of 30S particles and may also be responsible for determining the conformation of the 16S rRNA at the A site. The sequence is that of Small ribosomal subunit protein uS14 from Mesorhizobium japonicum (strain LMG 29417 / CECT 9101 / MAFF 303099) (Mesorhizobium loti (strain MAFF 303099)).